The following is a 417-amino-acid chain: Gamma-glutamyl phosphate reductase (417 aa).

It belongs to the gamma-glutamyl phosphate reductase family.

The protein localises to the cytoplasm. The enzyme catalyses L-glutamate 5-semialdehyde + phosphate + NADP(+) = L-glutamyl 5-phosphate + NADPH + H(+). Its pathway is amino-acid biosynthesis; L-proline biosynthesis; L-glutamate 5-semialdehyde from L-glutamate: step 2/2. In terms of biological role, catalyzes the NADPH-dependent reduction of L-glutamate 5-phosphate into L-glutamate 5-semialdehyde and phosphate. The product spontaneously undergoes cyclization to form 1-pyrroline-5-carboxylate. This chain is Gamma-glutamyl phosphate reductase, found in Clostridium novyi (strain NT).